Here is a 2259-residue protein sequence, read N- to C-terminus: Protein Ycf2 (2259 aa).

ATP is bound at residue 1556 to 1563 (GSQETGRS).

Belongs to the Ycf2 family.

The protein resides in the plastid. It is found in the chloroplast stroma. Functionally, probable ATPase of unknown function. Its presence in a non-photosynthetic plant (Epifagus virginiana) and experiments in tobacco indicate that it has an essential function which is probably not related to photosynthesis. The polypeptide is Protein Ycf2 (Physcomitrium patens (Spreading-leaved earth moss)).